Here is a 232-residue protein sequence, read N- to C-terminus: 5'-methylthioadenosine/S-adenosylhomocysteine nucleosidase (232 aa).

The active-site Proton acceptor is the Glu-14. Residues Gly-80, Val-154, and 175–176 (ME) contribute to the substrate site. Asp-199 functions as the Proton donor in the catalytic mechanism.

It belongs to the PNP/UDP phosphorylase family. MtnN subfamily.

The catalysed reaction is S-adenosyl-L-homocysteine + H2O = S-(5-deoxy-D-ribos-5-yl)-L-homocysteine + adenine. The enzyme catalyses S-methyl-5'-thioadenosine + H2O = 5-(methylsulfanyl)-D-ribose + adenine. It catalyses the reaction 5'-deoxyadenosine + H2O = 5-deoxy-D-ribose + adenine. It participates in amino-acid biosynthesis; L-methionine biosynthesis via salvage pathway; S-methyl-5-thio-alpha-D-ribose 1-phosphate from S-methyl-5'-thioadenosine (hydrolase route): step 1/2. Catalyzes the irreversible cleavage of the glycosidic bond in both 5'-methylthioadenosine (MTA) and S-adenosylhomocysteine (SAH/AdoHcy) to adenine and the corresponding thioribose, 5'-methylthioribose and S-ribosylhomocysteine, respectively. Also cleaves 5'-deoxyadenosine, a toxic by-product of radical S-adenosylmethionine (SAM) enzymes, into 5-deoxyribose and adenine. The sequence is that of 5'-methylthioadenosine/S-adenosylhomocysteine nucleosidase from Actinobacillus pleuropneumoniae serotype 3 (strain JL03).